The primary structure comprises 694 residues: Elongation factor G (694 aa).

Residues 8–283 (ERYRNIGIMA…AVIDYLPAPV (276 aa)) form the tr-type G domain. Residues 17 to 24 (AHIDAGKT), 81 to 85 (DTPGH), and 135 to 138 (NKMD) contribute to the GTP site.

This sequence belongs to the TRAFAC class translation factor GTPase superfamily. Classic translation factor GTPase family. EF-G/EF-2 subfamily.

Its subcellular location is the cytoplasm. Catalyzes the GTP-dependent ribosomal translocation step during translation elongation. During this step, the ribosome changes from the pre-translocational (PRE) to the post-translocational (POST) state as the newly formed A-site-bound peptidyl-tRNA and P-site-bound deacylated tRNA move to the P and E sites, respectively. Catalyzes the coordinated movement of the two tRNA molecules, the mRNA and conformational changes in the ribosome. This is Elongation factor G from Paramagnetospirillum magneticum (strain ATCC 700264 / AMB-1) (Magnetospirillum magneticum).